We begin with the raw amino-acid sequence, 492 residues long: Probable small intestine urate exporter (492 aa).

A disordered region spans residues 1–20 (MSTGADLKAREGDIPSDNMT). Asparagine 18, asparagine 44, asparagine 53, asparagine 63, asparagine 72, and asparagine 87 each carry an N-linked (GlcNAc...) asparagine glycan. 11 helical membrane passes run 112 to 132 (LSYG…VFGA), 134 to 154 (YVVG…PLAA), 156 to 176 (AGVA…VMVL), 198 to 218 (IAAS…GLIC), 225 to 245 (YIFY…FPLV), 287 to 307 (LPLW…STVM), 327 to 347 (ILSA…GLLA), 363 to 383 (KLFT…LPWV), 393 to 413 (FLVL…INFL), 426 to 446 (LLQV…GFFI), and 456 to 476 (NVFF…LIFS).

Belongs to the major facilitator superfamily. Sodium/anion cotransporter family. As to expression, expressed in the small intestine (at protein level).

The protein localises to the apical cell membrane. The catalysed reaction is 3 Na(+)(out) + phosphate(out) = 3 Na(+)(in) + phosphate(in). It catalyses the reaction urate(out) + n chloride(in) = urate(in) + n chloride(out). The enzyme catalyses L-thyroxine(out) = L-thyroxine(in). It carries out the reaction 3,3',5-triiodo-L-thyronine(out) = 3,3',5-triiodo-L-thyronine(in). Its function is as follows. Acts as a membrane potential-dependent organic anion transporter, the transport requires a low concentration of chloride ions. Mediates chloride-dependent transport of urate. Mediates sodium-independent high affinity transport of thyroid hormones including L-thyroxine (T4) and 3,3',5-triiodo-L-thyronine (T3). Can actively transport inorganic phosphate into cells via Na(+) cotransport. In Mus musculus (Mouse), this protein is Probable small intestine urate exporter (Slc17a4).